Consider the following 227-residue polypeptide: Cytidylate kinase (227 aa).

An ATP-binding site is contributed by 10–18 (GPASSGKST).

The protein belongs to the cytidylate kinase family. Type 1 subfamily.

The protein localises to the cytoplasm. It catalyses the reaction CMP + ATP = CDP + ADP. It carries out the reaction dCMP + ATP = dCDP + ADP. This is Cytidylate kinase from Streptococcus agalactiae serotype Ia (strain ATCC 27591 / A909 / CDC SS700).